The primary structure comprises 177 residues: Antigen TyF1 (177 aa).

The protein belongs to the Dps family. In terms of assembly, homodecamer.

This chain is Antigen TyF1, found in Treponema pallidum subsp. pertenue (Yaws treponeme).